A 415-amino-acid polypeptide reads, in one-letter code: UV excision repair protein RAD23 homolog B (415 aa).

One can recognise a Ubiquitin-like domain in the interval 1-79 (MQVTLKTLQQ…VVVMVTKPKA (79 aa)). The interval 80 to 175 (VTSAVPATTQ…STPGDSSRSN (96 aa)) is disordered. A compositionally biased stretch (low complexity) spans 84–143 (VPATTQQSSSPSTTTVSSSPAAAVAQAPAPTPALAPTSTPASTTPASTTASSEPAPTGAT). Thr155 carries the post-translational modification Phosphothreonine. Phosphoserine is present on residues Ser160 and Ser174. At Thr186 the chain carries Phosphothreonine. Residues 188 to 228 (QSYENMVTEIMSMGYEREQVIAALRASFNNPDRAVEYLLMG) enclose the UBA 1 domain. Ser199 carries the post-translational modification Phosphoserine. Tyr202 is modified (phosphotyrosine). In terms of domain architecture, STI1 spans 274-317 (HPLEFLRNQPQFQQMRQIIQQNPSLLPALLQQIGRENPQLLQQI). Residues 334–355 (EAGGQGGGGGGGGGGGGGGGGI) form a disordered region. A compositionally biased stretch (gly residues) spans 336–355 (GGQGGGGGGGGGGGGGGGGI). The UBA 2 domain maps to 370 to 410 (PQEKEAIERLKALGFPEGLVIQAYFACEKNENLAANFLLQQ).

This sequence belongs to the RAD23 family. In terms of assembly, component of the XPC complex composed of XPC, RAD23B and CETN2. Interacts with NGLY1 and PSMC1. Interacts with ATXN3. Interacts with AMFR. Interacts with VCP; the interaction is indirect and mediated by NGLY1.

Its subcellular location is the nucleus. The protein localises to the cytoplasm. Multiubiquitin chain receptor involved in modulation of proteasomal degradation. Binds to polyubiquitin chains. Proposed to be capable to bind simultaneously to the 26S proteasome and to polyubiquitinated substrates and to deliver ubiquitinated proteins to the proteasome. May play a role in endoplasmic reticulum-associated degradation (ERAD) of misfolded glycoproteins by association with PNGase and delivering deglycosylated proteins to the proteasome. Its function is as follows. Involved in global genome nucleotide excision repair (GG-NER) by acting as component of the XPC complex. Cooperatively with Cetn2 appears to stabilize Xpc. May protect Xpc from proteasomal degradation. In terms of biological role, the XPC complex is proposed to represent the first factor bound at the sites of DNA damage and together with other core recognition factors, Xpa, RPA and the TFIIH complex, is part of the pre-incision (or initial recognition) complex. The XPC complex recognizes a wide spectrum of damaged DNA characterized by distortions of the DNA helix such as single-stranded loops, mismatched bubbles or single-stranded overhangs. The orientation of XPC complex binding appears to be crucial for inducing a productive NER. XPC complex is proposed to recognize and to interact with unpaired bases on the undamaged DNA strand which is followed by recruitment of the TFIIH complex and subsequent scanning for lesions in the opposite strand in a 5'-to-3' direction by the NER machinery. Cyclobutane pyrimidine dimers (CPDs) which are formed upon UV-induced DNA damage esacpe detection by the XPC complex due to a low degree of structural perurbation. Instead they are detected by the UV-DDB complex which in turn recruits and cooperates with the XPC complex in the respective DNA repair. In vitro, the XPC:RAD23B dimer is sufficient to initiate NER; it preferentially binds to cisplatin and UV-damaged double-stranded DNA and also binds to a variety of chemically and structurally diverse DNA adducts. XPC:RAD23B contacts DNA both 5' and 3' of a cisplatin lesion with a preference for the 5' side. Xpc:Rad22b induces a bend in DNA upon binding. Xpc:Rad23b stimulates the activity of DNA glycosylases Tdg and Smug1. The sequence is that of UV excision repair protein RAD23 homolog B (Rad23b) from Rattus norvegicus (Rat).